The sequence spans 613 residues: Secretogranin-2 (613 aa).

The first 27 residues, 1–27, serve as a signal peptide directing secretion; sequence MAEAKTHWLGAVLSLIPLIFLLSEAEA. Positions 28-30 are excised as a propeptide; that stretch reads ASF. Disordered regions lie at residues 67–105 and 119–146; these read QQAH…DSLS and QAEN…PMDM. Basic and acidic residues predominate over residues 92–105; it reads ENGDLPESSRDSLS. A Sulfotyrosine modification is found at Tyr150. Phosphoserine is present on residues Ser173, Ser267, Ser428, Ser528, Ser551, and Ser552. The segment covering 257–283 has biased composition (basic and acidic residues); it reads ESQTQEEVRDSKENADKTEQINDEMKR. A disordered region spans residues 257-287; the sequence is ESQTQEEVRDSKENADKTEQINDEMKRSGQL. Basic and acidic residues predominate over residues 546 to 557; the sequence is HLSQHSSQETDK. The disordered stretch occupies residues 546 to 580; sequence HLSQHSSQETDKLASVSKRLPVGTPKSDDTPNRPY.

This sequence belongs to the chromogranin/secretogranin protein family. Interacts with Secretogranin III/SCG3. In terms of tissue distribution, highest levels detected in anterior pituitary followed by adrenal medulla and posterior pituitary (at protein level). In the brain, high levels are found in the hypothalamus, comparable to those present in posterior pituitary with two- to six-fold lower levels present in the other brain regions investigated including caudate nucleus, hippocampus, thalamus and brainstem (at protein level).

The protein resides in the secreted. Neuroendocrine protein of the granin family that regulates the biogenesis of secretory granules. This is Secretogranin-2 (SCG2) from Bos taurus (Bovine).